Reading from the N-terminus, the 349-residue chain is Mediator of RNA polymerase II transcription subunit 19 (349 aa).

The segment covering 1-28 has biased composition (low complexity); it reads MSFHPQTPQSPSHFSPSSSDQSTSMSGS. 2 disordered regions span residues 1–81 and 238–349; these read MSFH…EQKK and AHLN…VSGI. The span at 29 to 53 shows a compositional bias: polar residues; the sequence is IVSTTTTLPTPAHSVNGSSLANDMS. Positions 70 to 81 are enriched in basic and acidic residues; that stretch reads TSDDVGDREQKK. Residues 330-341 show a composition bias toward low complexity; that stretch reads QSYAQARQQSSY.

It belongs to the Mediator complex subunit 19 family. Component of the Mediator complex.

It localises to the nucleus. Component of the Mediator complex, a coactivator involved in the regulated transcription of nearly all RNA polymerase II-dependent genes. Mediator functions as a bridge to convey information from gene-specific regulatory proteins to the basal RNA polymerase II transcription machinery. Mediator is recruited to promoters by direct interactions with regulatory proteins and serves as a scaffold for the assembly of a functional preinitiation complex with RNA polymerase II and the general transcription factors. The sequence is that of Mediator of RNA polymerase II transcription subunit 19 (rox3) from Neurospora crassa (strain ATCC 24698 / 74-OR23-1A / CBS 708.71 / DSM 1257 / FGSC 987).